A 573-amino-acid chain; its full sequence is Solute carrier family 41 member 2 (573 aa).

Over 1–162 the chain is Extracellular; that stretch reads MTNSKGRSIT…KESSGIMALQ (162 aa). Phosphoserine occurs at positions 136 and 137. A helical transmembrane segment spans residues 163–183; the sequence is ILVPFLLAGFGTVSAGMVLDI. Residues 184–195 are Cytoplasmic-facing; that stretch reads VQHWEVFRKVTE. Residues 196 to 216 form a helical membrane-spanning segment; the sequence is VFILVPALLGLKGNLEMTLAS. The Extracellular segment spans residues 217 to 245; sequence RLSTAVNIGKMDSPIEKWNLIIGNLALKQ. The helical transmembrane segment at 246–266 threads the bilayer; sequence VQATVVGFLAAVAAIILGWIP. Topologically, residues 267–282 are cytoplasmic; sequence EGKYYLDHSILLCSSS. A helical membrane pass occupies residues 283–303; the sequence is VATAFIASLLQGIIMVGVIVG. Over 304–313 the chain is Extracellular; sequence SKKTGINPDN. Residues 314 to 334 form a helical membrane-spanning segment; it reads VATPIAASFGDLITLAILAWI. Residues 335–347 lie on the Cytoplasmic side of the membrane; it reads SQGLYSCLETYYY. The chain crosses the membrane as a helical span at residues 348–368; the sequence is ISPLVGVFFLALTPIWIIIAA. The Extracellular segment spans residues 369–376; sequence KHPATRTV. Residues 377–397 form a helical membrane-spanning segment; it reads LHSGWEPVITAMVISSIGGLI. At 398–406 the chain is on the cytoplasmic side; sequence LDTTVSDPN. A helical transmembrane segment spans residues 407–427; that stretch reads LVGIVVYTPVINGIGGNLVAI. Over 428–469 the chain is Extracellular; it reads QASRISTYLHLHSIPGELPDEPKGCYYPFRTFFGPGVNNKSA. The chain crosses the membrane as a helical span at residues 470–490; that stretch reads QVLLLLVIPGHLIFLYTIHLM. At 491–498 the chain is on the cytoplasmic side; the sequence is KSGHTSLT. Residues 499–519 traverse the membrane as a helical segment; the sequence is IIFIVVYLFAAVLQVFTLLWI. Over 520–543 the chain is Extracellular; it reads ADWMVHHFWRKGKDPDSFSIPYLT. A helical membrane pass occupies residues 544–564; the sequence is ALGDLLGTALLALSFHFLWLI. Residues 565–573 are Cytoplasmic-facing; it reads GDRDGDVGD.

Belongs to the SLC41A transporter family.

Its subcellular location is the cell membrane. The catalysed reaction is Mg(2+)(in) = Mg(2+)(out). It catalyses the reaction Mn(2+)(in) = Mn(2+)(out). The enzyme catalyses Co(2+)(in) = Co(2+)(out). It carries out the reaction Ni(2+)(in) = Ni(2+)(out). The catalysed reaction is Fe(2+)(in) = Fe(2+)(out). In terms of biological role, acts as a plasma-membrane magnesium transporter. Can also mediate the transport of other divalent metal cations in an order of Ba(2+) &gt; Ni(2+) &gt; Co(2+) &gt; Fe(2+) &gt; Mn(2+). The protein is Solute carrier family 41 member 2 (SLC41A2) of Macaca fascicularis (Crab-eating macaque).